Here is a 550-residue protein sequence, read N- to C-terminus: Glucose-6-phosphate isomerase (550 aa).

The active-site Proton donor is E356. Active-site residues include H387 and K515.

The protein belongs to the GPI family.

Its subcellular location is the cytoplasm. The catalysed reaction is alpha-D-glucose 6-phosphate = beta-D-fructose 6-phosphate. It functions in the pathway carbohydrate biosynthesis; gluconeogenesis. It participates in carbohydrate degradation; glycolysis; D-glyceraldehyde 3-phosphate and glycerone phosphate from D-glucose: step 2/4. Functionally, catalyzes the reversible isomerization of glucose-6-phosphate to fructose-6-phosphate. The sequence is that of Glucose-6-phosphate isomerase from Syntrophobacter fumaroxidans (strain DSM 10017 / MPOB).